The following is a 177-amino-acid chain: MGVSTAAYDAGPDKEHATQLLNNELQDKGFLLTSTEDIINWARTGSLHWMTFGLACCAVEMMHTSMPRYDAERFGIAPRASPRQSDVMIVAGTLTNKMAPALRKVYDQMPEPRYVISMGSCANGGGYYHYSYSVVRGCDRVVPVDIYVPGCPPTAEALLYGLLQLQRKIRRTGTIVR.

[4Fe-4S] cluster-binding residues include C56, C57, C121, and C151.

The protein belongs to the complex I 20 kDa subunit family. As to quaternary structure, NDH-1 is composed of 14 different subunits. Subunits NuoB, C, D, E, F, and G constitute the peripheral sector of the complex. [4Fe-4S] cluster serves as cofactor.

The protein localises to the cell inner membrane. It carries out the reaction a quinone + NADH + 5 H(+)(in) = a quinol + NAD(+) + 4 H(+)(out). Its function is as follows. NDH-1 shuttles electrons from NADH, via FMN and iron-sulfur (Fe-S) centers, to quinones in the respiratory chain. Couples the redox reaction to proton translocation (for every two electrons transferred, four hydrogen ions are translocated across the cytoplasmic membrane), and thus conserves the redox energy in a proton gradient. The polypeptide is NADH-quinone oxidoreductase subunit B (Dinoroseobacter shibae (strain DSM 16493 / NCIMB 14021 / DFL 12)).